Reading from the N-terminus, the 123-residue chain is Small ribosomal subunit protein uS12 (123 aa).

3-methylthioaspartic acid is present on Asp89.

It belongs to the universal ribosomal protein uS12 family. Part of the 30S ribosomal subunit. Contacts proteins S8 and S17. May interact with IF1 in the 30S initiation complex.

With S4 and S5 plays an important role in translational accuracy. In terms of biological role, interacts with and stabilizes bases of the 16S rRNA that are involved in tRNA selection in the A site and with the mRNA backbone. Located at the interface of the 30S and 50S subunits, it traverses the body of the 30S subunit contacting proteins on the other side and probably holding the rRNA structure together. The combined cluster of proteins S8, S12 and S17 appears to hold together the shoulder and platform of the 30S subunit. This Bifidobacterium animalis subsp. lactis (strain AD011) protein is Small ribosomal subunit protein uS12.